A 491-amino-acid polypeptide reads, in one-letter code: Probable protein phosphatase 2C 52 (491 aa).

Positions 1-11 (MVYDGAVKDQE) are enriched in basic and acidic residues. A disordered region spans residues 1–211 (MVYDGAVKDQ…REREKERERV (211 aa)). Low complexity predominate over residues 12 to 54 (SSANPASASAALSEASAAASEVTAAAAAGAGAGAAEEGAAVSG). Over residues 66 to 78 (GVRHPLKHRRFRA) the composition is skewed to basic residues. The segment covering 95–105 (VADEEASEVEQ) has biased composition (acidic residues). Basic and acidic residues predominate over residues 187–211 (VEEKKHKDQENKHKEREREKERERV). A PPM-type phosphatase domain is found at 229 to 475 (SCGYSSFRGK…DNITCIVVKF (247 aa)). Mn(2+) is bound by residues Asp-265, Gly-266, Asp-427, and Asp-466.

The protein belongs to the PP2C family. Mg(2+) serves as cofactor. Mn(2+) is required as a cofactor.

It carries out the reaction O-phospho-L-seryl-[protein] + H2O = L-seryl-[protein] + phosphate. The enzyme catalyses O-phospho-L-threonyl-[protein] + H2O = L-threonyl-[protein] + phosphate. The chain is Probable protein phosphatase 2C 52 from Oryza sativa subsp. japonica (Rice).